Consider the following 655-residue polypeptide: Probable alpha-galactosidase D (655 aa).

The first 16 residues, 1 to 16, serve as a signal peptide directing secretion; sequence MLPKIFYLSLLPAALG. N-linked (GlcNAc...) asparagine glycosylation is found at N47 and N91. C124 and C155 form a disulfide bridge. The active-site Nucleophile is D153. N-linked (GlcNAc...) asparagine glycosylation is found at N180 and N189. Position 198–202 (198–202) interacts with substrate; the sequence is EWGID. The active-site Proton donor is the D220. N-linked (GlcNAc...) asparagine glycans are attached at residues N349, N436, N458, N503, N537, N541, and N580.

The protein belongs to the glycosyl hydrolase 27 family.

It is found in the secreted. It catalyses the reaction Hydrolysis of terminal, non-reducing alpha-D-galactose residues in alpha-D-galactosides, including galactose oligosaccharides, galactomannans and galactolipids.. In terms of biological role, hydrolyzes a variety of simple alpha-D-galactoside as well as more complex molecules such as oligosaccharides and polysaccharides. The polypeptide is Probable alpha-galactosidase D (aglD) (Aspergillus flavus (strain ATCC 200026 / FGSC A1120 / IAM 13836 / NRRL 3357 / JCM 12722 / SRRC 167)).